Here is an 860-residue protein sequence, read N- to C-terminus: Leucine--tRNA ligase (860 aa).

The short motif at 42 to 52 (PYPSGRLHMGH) is the 'HIGH' region element. The 'KMSKS' region motif lies at 619 to 623 (KMSKS). Residue K622 coordinates ATP.

The protein belongs to the class-I aminoacyl-tRNA synthetase family.

The protein resides in the cytoplasm. It catalyses the reaction tRNA(Leu) + L-leucine + ATP = L-leucyl-tRNA(Leu) + AMP + diphosphate. The chain is Leucine--tRNA ligase from Klebsiella pneumoniae subsp. pneumoniae (strain ATCC 700721 / MGH 78578).